The following is a 244-amino-acid chain: tRNA pseudouridine synthase A (244 aa).

The active-site Nucleophile is Asp55. Substrate is bound at residue Tyr113.

This sequence belongs to the tRNA pseudouridine synthase TruA family. As to quaternary structure, homodimer.

The enzyme catalyses uridine(38/39/40) in tRNA = pseudouridine(38/39/40) in tRNA. Formation of pseudouridine at positions 38, 39 and 40 in the anticodon stem and loop of transfer RNAs. This is tRNA pseudouridine synthase A from Phytoplasma mali (strain AT).